Consider the following 325-residue polypeptide: G/U mismatch-specific uracil DNA glycosylase (325 aa).

A compositionally biased stretch (basic and acidic residues) spans 1–11 (MNDIETRDTGT). The interval 1-50 (MNDIETRDTGTKNDNSSEFNLSVKSHKRKRSFDDENLELEESREETSGGI) is disordered. Positions 12–23 (KNDNSSEFNLSV) are enriched in polar residues. The span at 34–43 (DENLELEESR) shows a compositional bias: acidic residues.

The protein belongs to the uracil-DNA glycosylase (UDG) superfamily. TDG/mug family.

It localises to the nucleus. It carries out the reaction Specifically hydrolyzes mismatched double-stranded DNA and polynucleotides, releasing free uracil.. In terms of biological role, removes uracil from G/U mispairs in ssDNA. Also corrects G/G mispairs. Does not catalyze the removal of thymine from G/T mispairs. The polypeptide is G/U mismatch-specific uracil DNA glycosylase (thp1) (Schizosaccharomyces pombe (strain 972 / ATCC 24843) (Fission yeast)).